The sequence spans 471 residues: Probable ribonuclease FAU-1 (471 aa).

It belongs to the FAU-1 family.

In terms of biological role, probable RNase involved in rRNA stability through maturation and/or degradation of precursor rRNAs. Binds to RNA in loop regions with AU-rich sequences. This is Probable ribonuclease FAU-1 from Caldivirga maquilingensis (strain ATCC 700844 / DSM 13496 / JCM 10307 / IC-167).